Reading from the N-terminus, the 750-residue chain is Methylmalonyl-CoA mutase, mitochondrial (750 aa).

A mitochondrion-targeting transit peptide spans 1–32 (MLRVKNQLFLLSPHYLKQVKESSGSRLIRQRF). Q50 serves as a coordination point for malonyl-CoA. The residue at position 89 (K89) is an N6-acetyllysine. Residues 96 to 99 (YPTM) and 106 to 110 (TIRQY) contribute to the malonyl-CoA site. Position 212 is an N6-acetyllysine (K212). Malonyl-CoA-binding positions include 216–218 (TIQ), R228, K255, H265, and 304–306 (RLS). K335 carries the post-translational modification N6-acetyllysine. An N6-succinyllysine modification is found at K343. A Phosphoserine modification is found at S481. K595 carries the N6-succinyllysine modification. K602 carries the post-translational modification N6-acetyllysine. Positions 614-746 (RPRLLVAKMG…DDIEKCLEKK (133 aa)) constitute a B12-binding domain. An adenosylcob(III)alamin-binding site is contributed by H627.

Belongs to the methylmalonyl-CoA mutase family. As to quaternary structure, homodimer. Interacts (the apoenzyme form) with MMAA; the interaction is GTP dependent. The cofactor is adenosylcob(III)alamin.

Its subcellular location is the mitochondrion matrix. It is found in the mitochondrion. The protein resides in the cytoplasm. The catalysed reaction is (R)-methylmalonyl-CoA = succinyl-CoA. Inhibited by itaconyl-CoA, a metabolite that inactivates the coenzyme B12 cofactor. Functionally, catalyzes the reversible isomerization of methylmalonyl-CoA (MMCoA) (generated from branched-chain amino acid metabolism and degradation of dietary odd chain fatty acids and cholesterol) to succinyl-CoA (3-carboxypropionyl-CoA), a key intermediate of the tricarboxylic acid cycle. This is Methylmalonyl-CoA mutase, mitochondrial (MMUT) from Macaca fascicularis (Crab-eating macaque).